The chain runs to 50 residues: Large ribosomal subunit protein bL33A (50 aa).

The protein belongs to the bacterial ribosomal protein bL33 family.

The chain is Large ribosomal subunit protein bL33A from Streptococcus thermophilus (strain CNRZ 1066).